The chain runs to 311 residues: HPr kinase/phosphorylase (311 aa).

Catalysis depends on residues His136 and Lys157. ATP is bound at residue 151-158; the sequence is GDSGIGKS. Ser158 is a Mg(2+) binding site. The active-site Proton acceptor; for phosphorylation activity. Proton donor; for dephosphorylation activity is Asp175. Residues 199–208 are important for the catalytic mechanism of both phosphorylation and dephosphorylation; the sequence is LEIRGLGIIN. Glu200 lines the Mg(2+) pocket. Residue Arg241 is part of the active site. Residues 262–267 form an important for the catalytic mechanism of dephosphorylation region; it reads PVRPGR.

It belongs to the HPrK/P family. In terms of assembly, homohexamer. Requires Mg(2+) as cofactor.

The catalysed reaction is [HPr protein]-L-serine + ATP = [HPr protein]-O-phospho-L-serine + ADP + H(+). It carries out the reaction [HPr protein]-O-phospho-L-serine + phosphate + H(+) = [HPr protein]-L-serine + diphosphate. Its function is as follows. Catalyzes the ATP- as well as the pyrophosphate-dependent phosphorylation of a specific serine residue in HPr, a phosphocarrier protein of the phosphoenolpyruvate-dependent sugar phosphotransferase system (PTS). HprK/P also catalyzes the pyrophosphate-producing, inorganic phosphate-dependent dephosphorylation (phosphorolysis) of seryl-phosphorylated HPr (P-Ser-HPr). The two antagonistic activities of HprK/P are regulated by several intracellular metabolites, which change their concentration in response to the absence or presence of rapidly metabolisable carbon sources (glucose, fructose, etc.) in the growth medium. Therefore, by controlling the phosphorylation state of HPr, HPrK/P is a sensor enzyme that plays a major role in the regulation of carbon metabolism and sugar transport: it mediates carbon catabolite repression (CCR), and regulates PTS-catalyzed carbohydrate uptake and inducer exclusion. The polypeptide is HPr kinase/phosphorylase (Staphylococcus haemolyticus (strain JCSC1435)).